The primary structure comprises 1005 residues: Espin-like protein (1005 aa).

ANK repeat units follow at residues 1 to 31 (MEKQ…GPGI), 35 to 64 (LGAG…LPGN), 69 to 99 (NGAT…GLQD), 103 to 132 (SGVS…SATL), 136 to 166 (EGAR…SVNR), 170 to 200 (SGAS…DVHL), 204 to 234 (DGMS…GLTA), 238 to 267 (EGAT…PILR), and 270 to 299 (WGGT…DPSL). Disordered stretches follow at residues 333–444 (LMTP…ERGQ) and 462–483 (LGAE…TEQA). The span at 334 to 346 (MTPPPPPFPPPPL) shows a compositional bias: pro residues. Polar residues predominate over residues 468-480 (AEAQDNGGSSGPT). A coiled-coil region spans residues 517 to 541 (LQLRRRCQEYESELGRLAAELQALL). 3 disordered regions span residues 616 to 644 (GDEK…AQRQ), 695 to 730 (RSGL…AAAG), and 773 to 795 (LRGQ…PRLG).

In terms of assembly, interacts with MYO3A (via C-terminus). Interacts with MYO3B (via C-terminus).

It localises to the cell projection. The protein resides in the stereocilium. Its function is as follows. Binds to but does not cross-link actin. Required for the formation and maintenance of inner ear hair cell stereocilia and staircase formation. Essential for normal hearing. This chain is Espin-like protein (ESPNL), found in Homo sapiens (Human).